Here is a 385-residue protein sequence, read N- to C-terminus: Succinate--CoA ligase [ADP-forming] subunit beta (385 aa).

The region spanning 9 to 244 is the ATP-grasp domain; that stretch reads KEVLRKYGVS…LDEEDPKEIE (236 aa). Residues Lys-46, 53-55, Glu-99, Cys-102, and Glu-107 each bind ATP; that span reads GRG. Residues Asn-199 and Asp-213 each contribute to the Mg(2+) site. Substrate-binding positions include Asn-264 and 321–323; that span reads GIM.

This sequence belongs to the succinate/malate CoA ligase beta subunit family. As to quaternary structure, heterotetramer of two alpha and two beta subunits. Mg(2+) serves as cofactor.

It catalyses the reaction succinate + ATP + CoA = succinyl-CoA + ADP + phosphate. The catalysed reaction is GTP + succinate + CoA = succinyl-CoA + GDP + phosphate. It functions in the pathway carbohydrate metabolism; tricarboxylic acid cycle; succinate from succinyl-CoA (ligase route): step 1/1. Its function is as follows. Succinyl-CoA synthetase functions in the citric acid cycle (TCA), coupling the hydrolysis of succinyl-CoA to the synthesis of either ATP or GTP and thus represents the only step of substrate-level phosphorylation in the TCA. The beta subunit provides nucleotide specificity of the enzyme and binds the substrate succinate, while the binding sites for coenzyme A and phosphate are found in the alpha subunit. The chain is Succinate--CoA ligase [ADP-forming] subunit beta from Bacillus velezensis (strain DSM 23117 / BGSC 10A6 / LMG 26770 / FZB42) (Bacillus amyloliquefaciens subsp. plantarum).